A 1479-amino-acid chain; its full sequence is Protein CHROMATIN REMODELING 20 (1479 aa).

A coiled-coil region spans residues 19-49; the sequence is EVIVESKEDEMDIIIEENREAEQEVMEVKAR. Positions 40 to 55 are enriched in basic and acidic residues; sequence EQEVMEVKARDGRGEQ. Residues 40–109 form a disordered region; sequence EQEVMEVKAR…DELDLEKPLS (70 aa). Residues 76 to 86 are compositionally biased toward low complexity; that stretch reads DASSRSESSDF. A compositionally biased stretch (basic and acidic residues) spans 94–109; sequence ILSRRDDELDLEKPLS. The stretch at 109 to 199 forms a coiled coil; sequence SEEEIDELIS…EQLDGAGIEL (91 aa). The 130-residue stretch at 472-601 folds into the ADD domain; sequence RDDSQNPANN…KKSIELSSDS (130 aa). Residues 483 to 514 form a GATA-type; atypical zinc finger; that stretch reads RCTACNKVAVEVHSHPLLEVIVCMDCKRSIED. Residues 524–577 form a PHD-type; atypical zinc finger; sequence ERHCEWCGHIADLIDCRTCEKLFCASCIKRNIGEEYMSEAQSSGWDCCCCSPIP. The stretch at 578 to 598 forms a coiled coil; the sequence is LQRLTLELEKAMRDKKSIELS. The segment at 594-615 is disordered; sequence SIELSSDSSSDSSSDNNSVDTD. A compositionally biased stretch (low complexity) spans 598–615; it reads SSDSSSDSSSDNNSVDTD. Residues 741-924 enclose the Helicase ATP-binding domain; the sequence is VKSGDKGLGC…YCMVDFVREG (184 aa). 754–761 provides a ligand contact to ATP; that stretch reads HTMGLGKT. Residues 875-878 carry the DEAH box motif; the sequence is DEAH. The Helicase C-terminal domain occupies 1122–1290; the sequence is DILSMSADVG…QVHRTISKEE (169 aa). A disordered region spans residues 1400 to 1423; it reads SESPVVPKPSPSTQTEPLPQPKGF.

Belongs to the SNF2/RAD54 helicase family.

The protein localises to the nucleus. Its subcellular location is the chromosome. It localises to the telomere. Its function is as follows. Involved in transcriptional regulation and chromatin remodeling. Facilitates DNA replication in multiple cellular environments and is required for efficient replication of a subset of genomic loci. Binds to DNA tandem repeat sequences in both telomeres and euchromatin and in vitro binds DNA quadruplex structures. May help stabilizing G-rich regions into regular chromatin structures by remodeling G4 DNA and incorporating H3.3-containing nucleosomes. Involved in DNA repair of gamma-irradiation-mediated damages. The polypeptide is Protein CHROMATIN REMODELING 20 (Arabidopsis thaliana (Mouse-ear cress)).